Here is a 427-residue protein sequence, read N- to C-terminus: Glucose-6-phosphate isomerase (427 aa).

Glu277 functions as the Proton donor in the catalytic mechanism. Residues His298 and Lys414 contribute to the active site.

This sequence belongs to the GPI family.

Its subcellular location is the cytoplasm. The catalysed reaction is alpha-D-glucose 6-phosphate = beta-D-fructose 6-phosphate. It participates in carbohydrate biosynthesis; gluconeogenesis. It functions in the pathway carbohydrate degradation; glycolysis; D-glyceraldehyde 3-phosphate and glycerone phosphate from D-glucose: step 2/4. Functionally, catalyzes the reversible isomerization of glucose-6-phosphate to fructose-6-phosphate. The polypeptide is Glucose-6-phosphate isomerase (Mycoplasma mycoides subsp. mycoides SC (strain CCUG 32753 / NCTC 10114 / PG1)).